A 335-amino-acid polypeptide reads, in one-letter code: Avermitilol synthase (335 aa).

Mg(2+) contacts are provided by aspartate 80, aspartate 84, asparagine 219, serine 223, and glutamate 227. The short motif at 80–84 (DDQFD) is the DDXXD motif element.

This sequence belongs to the terpene synthase family. Requires Mg(2+) as cofactor.

It carries out the reaction (2E,6E)-farnesyl diphosphate + H2O = avermitilol + diphosphate. In terms of biological role, catalyzes the cyclization of farnesyl diphosphate to avermitilol. The chain is Avermitilol synthase (tpc1) from Streptomyces avermitilis (strain ATCC 31267 / DSM 46492 / JCM 5070 / NBRC 14893 / NCIMB 12804 / NRRL 8165 / MA-4680).